The sequence spans 151 residues: Deoxyuridine 5'-triphosphate nucleotidohydrolase (151 aa).

Substrate-binding positions include 70–72, Asn-83, 87–89, and Met-97; these read RSG and LID.

The protein belongs to the dUTPase family. Mg(2+) is required as a cofactor.

The enzyme catalyses dUTP + H2O = dUMP + diphosphate + H(+). The protein operates within pyrimidine metabolism; dUMP biosynthesis; dUMP from dCTP (dUTP route): step 2/2. In terms of biological role, this enzyme is involved in nucleotide metabolism: it produces dUMP, the immediate precursor of thymidine nucleotides and it decreases the intracellular concentration of dUTP so that uracil cannot be incorporated into DNA. This is Deoxyuridine 5'-triphosphate nucleotidohydrolase from Pseudomonas entomophila (strain L48).